The following is a 132-amino-acid chain: Monothiol glutaredoxin-S9 (132 aa).

Positions 16 to 38 are disordered; that stretch reads ASRPATAAAAPPPPPPRGEEEEV. Residues 35–131 form the Glutaredoxin domain; sequence EEEVRRAVAE…PILKEAGALW (97 aa). Residue Cys55 participates in [2Fe-2S] cluster binding. The short motif at 129 to 132 is the Responsive for interaction with TGA factors element; sequence ALWL.

This sequence belongs to the glutaredoxin family. CC-type subfamily.

It localises to the cytoplasm. It is found in the nucleus. May only reduce GSH-thiol disulfides, but not protein disulfides. The polypeptide is Monothiol glutaredoxin-S9 (GRXS9) (Oryza sativa subsp. japonica (Rice)).